The following is a 128-amino-acid chain: uncharacterized protein (128 aa).

2 helical membrane passes run 33–53 and 61–81; these read LLYI…VCYV and FFCW…VIIY. A compositionally biased stretch (polar residues) spans 99–120; it reads DSLNQNVGESQSNEPPKYTSTF. The segment at 99–128 is disordered; the sequence is DSLNQNVGESQSNEPPKYTSTFMDELDKQD.

Its subcellular location is the membrane. This is an uncharacterized protein from Schizosaccharomyces pombe (strain 972 / ATCC 24843) (Fission yeast).